A 499-amino-acid chain; its full sequence is Glutamate--tRNA ligase (499 aa).

The short motif at 12–22 is the 'HIGH' region element; it reads PSPTGHLHIGN. Residues 259–263 carry the 'KMSKS' region motif; it reads KLSKR. Lys262 is a binding site for ATP.

This sequence belongs to the class-I aminoacyl-tRNA synthetase family. Glutamate--tRNA ligase type 1 subfamily. In terms of assembly, monomer.

Its subcellular location is the cytoplasm. The catalysed reaction is tRNA(Glu) + L-glutamate + ATP = L-glutamyl-tRNA(Glu) + AMP + diphosphate. In terms of biological role, catalyzes the attachment of glutamate to tRNA(Glu) in a two-step reaction: glutamate is first activated by ATP to form Glu-AMP and then transferred to the acceptor end of tRNA(Glu). The polypeptide is Glutamate--tRNA ligase (Lactobacillus johnsonii (strain CNCM I-12250 / La1 / NCC 533)).